Consider the following 652-residue polypeptide: DNA ligase (652 aa).

NAD(+)-binding positions include 29-33 (DSDYD), 78-79 (SL), and Glu-107. The active-site N6-AMP-lysine intermediate is Lys-109. Positions 130, 164, 278, and 302 each coordinate NAD(+). Residues Cys-395, Cys-398, Cys-413, and Cys-418 each contribute to the Zn(2+) site. A BRCT domain is found at 577–652 (NSDAALFGLT…IEDEDWLRKL (76 aa)).

Belongs to the NAD-dependent DNA ligase family. LigA subfamily. Mg(2+) is required as a cofactor. The cofactor is Mn(2+).

It catalyses the reaction NAD(+) + (deoxyribonucleotide)n-3'-hydroxyl + 5'-phospho-(deoxyribonucleotide)m = (deoxyribonucleotide)n+m + AMP + beta-nicotinamide D-nucleotide.. In terms of biological role, DNA ligase that catalyzes the formation of phosphodiester linkages between 5'-phosphoryl and 3'-hydroxyl groups in double-stranded DNA using NAD as a coenzyme and as the energy source for the reaction. It is essential for DNA replication and repair of damaged DNA. This Streptococcus pyogenes serotype M18 (strain MGAS8232) protein is DNA ligase.